The primary structure comprises 467 residues: tRNA modification GTPase MnmE (467 aa).

The (6S)-5-formyl-5,6,7,8-tetrahydrofolate site is built by Arg-27, Glu-89, and Arg-128. Residues 225-387 (GISMVIAGRP…LKQAIFTVVT (163 aa)) form the TrmE-type G domain. Asn-235 lines the K(+) pocket. GTP is bound by residues 235–240 (NVGKSS), 254–260 (TSIAGTT), 279–282 (DTAG), and 368–370 (SAR). Ser-239 provides a ligand contact to Mg(2+). K(+) is bound by residues Thr-254, Ile-256, and Thr-259. Position 260 (Thr-260) interacts with Mg(2+). Lys-467 contributes to the (6S)-5-formyl-5,6,7,8-tetrahydrofolate binding site.

The protein belongs to the TRAFAC class TrmE-Era-EngA-EngB-Septin-like GTPase superfamily. TrmE GTPase family. Homodimer. Heterotetramer of two MnmE and two MnmG subunits. It depends on K(+) as a cofactor.

It is found in the cytoplasm. Exhibits a very high intrinsic GTPase hydrolysis rate. Involved in the addition of a carboxymethylaminomethyl (cmnm) group at the wobble position (U34) of certain tRNAs, forming tRNA-cmnm(5)s(2)U34. The chain is tRNA modification GTPase MnmE from Desulfotalea psychrophila (strain LSv54 / DSM 12343).